The following is a 337-amino-acid chain: MQKSLITKWLFISCIMVIAMIVIGGITRLTGSGLSIVEWRPVTGILPPFSFESWQAEFAKYKAFPEYNSINYGMTLSQFKFIYLLEFVHRLLGRITALIYIVPLIYFYFKDVIKNRDILPYIIALLLFCVQGFMGWYMVKSGLLNSPSVSHFRLAFHLIIAVIIYHILFYQLIKNRCDILLIPSQTDLKLPLIFSGIAITVIYVQIFLGAMVAGLDAGLIYNSFPLMGDNFIPMEIKDNFFNLANLHDPVFIQFIHRLGGYSVFLVVVVLVICLLKIEHPKLNKIAYFLMIALLMQISTGIITLLYSVPIIIASIHQLFAIILLSIIIWCYFIIKTS.

5 helical membrane-spanning segments follow: residues 6–26, 93–113, 118–138, 154–174, and 192–212; these read ITKWLFISCIMVIAMIVIGGI, GRITALIYIVPLIYFYFKDVI, ILPYIIALLLFCVQGFMGWYM, LAFHLIIAVIIYHILFYQLIK, and LIFSGIAITVIYVQIFLGAMV. Heme is bound at residue His256. The next 3 membrane-spanning stretches (helical) occupy residues 258 to 278, 285 to 305, and 308 to 328; these read LGGYSVFLVVVVLVICLLKIE, IAYFLMIALLMQISTGIITLL, and VPIIIASIHQLFAIILLSIII. His316 is a heme binding site.

Belongs to the COX15/CtaA family. Type 2 subfamily. As to quaternary structure, interacts with CtaB. The cofactor is heme b.

It is found in the cell membrane. The catalysed reaction is Fe(II)-heme o + 2 A + H2O = Fe(II)-heme a + 2 AH2. It functions in the pathway porphyrin-containing compound metabolism; heme A biosynthesis; heme A from heme O: step 1/1. In terms of biological role, catalyzes the conversion of heme O to heme A by two successive hydroxylations of the methyl group at C8. The first hydroxylation forms heme I, the second hydroxylation results in an unstable dihydroxymethyl group, which spontaneously dehydrates, resulting in the formyl group of heme A. This chain is Heme A synthase, found in Rickettsia felis (strain ATCC VR-1525 / URRWXCal2) (Rickettsia azadi).